Reading from the N-terminus, the 107-residue chain is Nucleoid-associated protein GDI3467/Gdia_2910 (107 aa).

The protein belongs to the YbaB/EbfC family. As to quaternary structure, homodimer.

It is found in the cytoplasm. The protein localises to the nucleoid. Binds to DNA and alters its conformation. May be involved in regulation of gene expression, nucleoid organization and DNA protection. The polypeptide is Nucleoid-associated protein GDI3467/Gdia_2910 (Gluconacetobacter diazotrophicus (strain ATCC 49037 / DSM 5601 / CCUG 37298 / CIP 103539 / LMG 7603 / PAl5)).